The following is a 115-amino-acid chain: Phosphoribosyl-AMP cyclohydrolase (115 aa).

D80 lines the Mg(2+) pocket. Position 81 (C81) interacts with Zn(2+). Residues D82 and D84 each coordinate Mg(2+). Positions 97 and 104 each coordinate Zn(2+).

This sequence belongs to the PRA-CH family. As to quaternary structure, homodimer. Requires Mg(2+) as cofactor. Zn(2+) serves as cofactor.

Its subcellular location is the cytoplasm. It carries out the reaction 1-(5-phospho-beta-D-ribosyl)-5'-AMP + H2O = 1-(5-phospho-beta-D-ribosyl)-5-[(5-phospho-beta-D-ribosylamino)methylideneamino]imidazole-4-carboxamide. It functions in the pathway amino-acid biosynthesis; L-histidine biosynthesis; L-histidine from 5-phospho-alpha-D-ribose 1-diphosphate: step 3/9. Its function is as follows. Catalyzes the hydrolysis of the adenine ring of phosphoribosyl-AMP. This is Phosphoribosyl-AMP cyclohydrolase from Mycobacterium sp. (strain MCS).